The following is a 310-amino-acid chain: MKITTKVLIIGSGPAGLSAAIYTARAALKPILINGMQPGGQLTITTDVENYPGFAETVQGPWLMEQMSMQAKNVGTEIISDYVEKVDLSKRPFKVFTGAGNEYEAESIIICTGAEAKWLSIASEQEFRGFGVSACATCDGFFFKNQEIVVVGGGNSAVEEALYLTNHASKVTITHRRDSFRAEKILQDRLFKNPKISVIWDHVVDEIVGSDKPKSVTGVKIQNVHTKEISLVNCSGVFIAIGHAPNTGLFTGQIAMDDDNYIITKSGTTKTSVEGVFAAGDVQDKIYRQAVTAAGSGCMAALEVEKFLNK.

34–41 (NGMQPGGQ) is an FAD binding site. Cys-135 and Cys-138 are oxidised to a cystine. 281 to 290 (DVQDKIYRQA) contributes to the FAD binding site.

It belongs to the class-II pyridine nucleotide-disulfide oxidoreductase family. In terms of assembly, homodimer. The cofactor is FAD.

The protein localises to the cytoplasm. The enzyme catalyses [thioredoxin]-dithiol + NADP(+) = [thioredoxin]-disulfide + NADPH + H(+). The polypeptide is Thioredoxin reductase (trxB) (Rickettsia felis (strain ATCC VR-1525 / URRWXCal2) (Rickettsia azadi)).